Here is a 263-residue protein sequence, read N- to C-terminus: Taurine import ATP-binding protein TauB (263 aa).

Residues 4 to 235 (LTAEAISLSF…RYAAGETVRS (232 aa)) form the ABC transporter domain. Residue 40 to 47 (GPSGCGKS) participates in ATP binding.

The protein belongs to the ABC transporter superfamily. Taurine importer (TC 3.A.1.17.1) family. In terms of assembly, the complex is composed of two ATP-binding proteins (TauB), two transmembrane proteins (TauC) and a solute-binding protein (TauA).

It localises to the cell inner membrane. The enzyme catalyses taurine(out) + ATP + H2O = taurine(in) + ADP + phosphate + H(+). Functionally, part of the ABC transporter complex TauABC involved in taurine import. Responsible for energy coupling to the transport system. This chain is Taurine import ATP-binding protein TauB, found in Pseudomonas aeruginosa (strain UCBPP-PA14).